Here is a 92-residue protein sequence, read N- to C-terminus: Large ribosomal subunit protein eL43 (92 aa).

Residues 39-60 (CSFCGKKAVKRGAAGIWNCSSC) form a C4-type zinc finger.

The protein belongs to the eukaryotic ribosomal protein eL43 family.

This Eremothecium gossypii (strain ATCC 10895 / CBS 109.51 / FGSC 9923 / NRRL Y-1056) (Yeast) protein is Large ribosomal subunit protein eL43 (RPL43).